The primary structure comprises 1089 residues: MGTSHQVFLVLSCLLTGPGLISCQLLLPSILPNENEKIVQLNSSFSLRCVGESEVSWQHPMSEEDDPNVEIRSEENNSGLFVTVLEVVNASAAHTGWYTCYYNHTQTDESEIEGRHIYIYVPDPDMAFVPLGMTDSLVIVEEDDSAIIPCRTTDPETQVTLHNNGRLVPASYDSRQGFNGTFSVGPYICEATVKGRTFKTSEFNVYALKATSELNLEMDARQTVYKAGETIVVTCAVFNNEVVDLQWTYPGEVRNKGITMLEEIKLPSIKLVYTLTVPKATVKDSGEYECAARQATKEVKEMKRVTISVHEKGFVEIEPTFGQLEAVNLHEVREFVVEVQAYPTPRISWLKDNLTLIENLTEITTDVQKSQETRYQSKLKLIRAKEEDSGHYTIIVQNEDDVKSYTFELSTLVPASILDLVDDHHGSGGGQTVRCTAEGTPLPEIDWMICKHIKKCNNDTSWTVLASNVSNIITELPRRGRSTVEGRVSFAKVEETIAVRCLAKNNLSVVARELKLVAPTLRSELTVAAAVLVLLVIVIVSLIVLVVIWKQKPRYEIRWRVIESISPDGHEYIYVDPMQLPYDSRWEFPRDGLVLGRILGSGAFGKVVEGTAYGLSRSQPVMKVAVKMLKPTARSSEKQALMSELKIMTHLGPHLNIVNLLGACTKSGPIYIITEYCFYGDLVNYLHKNRDSFMSQHPEKPKKDLDIFGLNPADESTRSYVILSFENNGDYMDMKQADTTQYVPMLERKEVSKYSDIQRSLYDRPASYKKKSMLDSEVKNLLSDDDSEGLTLLDLLSFTYQVARGMEFLASKNCVHRDLAARNVLLAQGKIVKICDFGLARDIMHDSNYVSKGSTFLPVKWMAPESIFDNLYTTLSDVWSYGILLWEIFSLGGTPYPGMMVDSTFYNKIKSGYRMAKPDHATSEVYEIMVQCWNSEPEKRPSFYHLSEIVENLLPGQYKKSYEKIHLDFLKSDHPAVARMRVDSDNAYIGVTYKNEEDKLKDWEGGLDEQRLSADSGYIIPLPDIDPVPEEEDLGKRNRHSSQTSEESAIETGSSSSTFIKREDETIEDIDMMDDIGIDSSDLVEDSFL.

The N-terminal stretch at 1–24 (MGTSHQVFLVLSCLLTGPGLISCQ) is a signal peptide. 5 consecutive Ig-like C2-type domains span residues 25–113 (LLLP…SEIE), 117–201 (IYIY…FKTS), 202–306 (EFNV…KRVT), 319–410 (PTFG…FELS), and 414–517 (PASI…LKLV). The Extracellular portion of the chain corresponds to 25-528 (LLLPSILPNE…PTLRSELTVA (504 aa)). N-linked (GlcNAc...) asparagine glycans are attached at residues N42, N76, N89, N103, and N179. C49 and C100 are joined by a disulfide. 2 cysteine pairs are disulfide-bonded: C150-C189 and C235-C290. 5 N-linked (GlcNAc...) asparagine glycosylation sites follow: N353, N359, N458, N468, and N506. The cysteines at positions 435 and 501 are disulfide-linked. Residues 529 to 549 (AAVLVLLVIVIVSLIVLVVIW) form a helical membrane-spanning segment. Over 550 to 1089 (KQKPRYEIRW…SSDLVEDSFL (540 aa)) the chain is Cytoplasmic. Phosphotyrosine; by autocatalysis is present on residues Y572 and Y574. In terms of domain architecture, Protein kinase spans 593 to 954 (LVLGRILGSG…HLSEIVENLL (362 aa)). ATP is bound by residues 599 to 607 (LGSGAFGKV) and K627. Phosphotyrosine; by autocatalysis is present on residues Y720, Y731, Y742, Y754, Y762, and Y768. The active-site Proton acceptor is D818. Residues Y849, Y988, and Y1018 each carry the phosphotyrosine; by autocatalysis modification. The disordered stretch occupies residues 1018–1089 (YIIPLPDIDP…SSDLVEDSFL (72 aa)). The segment covering 1041–1059 (SSQTSEESAIETGSSSSTF) has biased composition (polar residues). Over residues 1065 to 1089 (ETIEDIDMMDDIGIDSSDLVEDSFL) the composition is skewed to acidic residues.

The protein belongs to the protein kinase superfamily. Tyr protein kinase family. CSF-1/PDGF receptor subfamily. Interacts with homodimeric PDGFA, PDGFB and PDGFC, and with heterodimers formed by PDGFA and PDGFB. Monomer in the absence of bound ligand. Interaction with dimeric PDGFA, PDGFB and/or PDGFC leads to receptor dimerization, where both PDGFRA homodimers and heterodimers with PDGFRB are observed. Interacts (tyrosine phosphorylated) with SHB (via SH2 domain). Interacts (tyrosine phosphorylated) with SHF (via SH2 domain). Interacts (tyrosine phosphorylated) with SRC (via SH2 domain). Interacts (tyrosine phosphorylated) with PIK3R1. Interacts (tyrosine phosphorylated) with PLCG1 (via SH2 domain). Interacts (tyrosine phosphorylated) with CRK, GRB2 and GRB7. Interacts with CD248; this interaction promotes PDGF receptor signaling pathway. Ubiquitinated, leading to its internalization and degradation. In terms of processing, autophosphorylated on tyrosine residues upon ligand binding. Autophosphorylation occurs in trans, i.e. one subunit of the dimeric receptor phosphorylates tyrosine residues on the other subunit. Phosphorylation at Tyr-731 and Tyr-742 is important for interaction with PIK3R1. Phosphorylation at Tyr-720 and Tyr-754 is important for interaction with PTPN11. Phosphorylation at Tyr-762 is important for interaction with CRK. Phosphorylation at Tyr-572 and Tyr-574 is important for interaction with SRC and SRC family members. Phosphorylation at Tyr-988 and Tyr-1018 is important for interaction with PLCG1. As to expression, focally expressed in cortical interstitial cells and highly expressed in the interstitium of the papillary region. Also expressed by adventitial cells in arterial vessels. Up-regulated in areas of renal fibrosis. In mice with unilateral ureteral obstruction, expression in cortical interstitial cells becomes prominent at day 4 which increases progressively until day 14.

It localises to the cell membrane. It is found in the cell projection. The protein resides in the cilium. Its subcellular location is the golgi apparatus. The catalysed reaction is L-tyrosyl-[protein] + ATP = O-phospho-L-tyrosyl-[protein] + ADP + H(+). With respect to regulation, present in an inactive conformation in the absence of bound ligand. Binding of PDGFA and/or PDGFB leads to dimerization and activation by autophosphorylation on tyrosine residues. Inhibited by imatinib, nilotinib and sorafenib. In terms of biological role, tyrosine-protein kinase that acts as a cell-surface receptor for PDGFA, PDGFB and PDGFC and plays an essential role in the regulation of embryonic development, cell proliferation, survival and chemotaxis. Depending on the context, promotes or inhibits cell proliferation and cell migration. Plays an important role in the differentiation of bone marrow-derived mesenchymal stem cells. Required for normal skeleton development and cephalic closure during embryonic development. Required for normal development of the mucosa lining the gastrointestinal tract, and for recruitment of mesenchymal cells and normal development of intestinal villi. Plays a role in cell migration and chemotaxis in wound healing. Plays a role in platelet activation, secretion of agonists from platelet granules, and in thrombin-induced platelet aggregation. Binding of its cognate ligands - homodimeric PDGFA, homodimeric PDGFB, heterodimers formed by PDGFA and PDGFB or homodimeric PDGFC -leads to the activation of several signaling cascades; the response depends on the nature of the bound ligand and is modulated by the formation of heterodimers between PDGFRA and PDGFRB. Phosphorylates PIK3R1, PLCG1, and PTPN11. Activation of PLCG1 leads to the production of the cellular signaling molecules diacylglycerol and inositol 1,4,5-trisphosphate, mobilization of cytosolic Ca(2+) and the activation of protein kinase C. Phosphorylates PIK3R1, the regulatory subunit of phosphatidylinositol 3-kinase, and thereby mediates activation of the AKT1 signaling pathway. Mediates activation of HRAS and of the MAP kinases MAPK1/ERK2 and/or MAPK3/ERK1. Promotes activation of STAT family members STAT1, STAT3 and STAT5A and/or STAT5B. Receptor signaling is down-regulated by protein phosphatases that dephosphorylate the receptor and its down-stream effectors, and by rapid internalization of the activated receptor. This chain is Platelet-derived growth factor receptor alpha (Pdgfra), found in Mus musculus (Mouse).